The following is a 312-amino-acid chain: Acetaldehyde dehydrogenase (312 aa).

12-15 (SGNV) contacts NAD(+). Cys-132 acts as the Acyl-thioester intermediate in catalysis. Residues 163 to 171 (SAGPGTRAN) and Asn-290 contribute to the NAD(+) site.

The protein belongs to the acetaldehyde dehydrogenase family.

The enzyme catalyses acetaldehyde + NAD(+) + CoA = acetyl-CoA + NADH + H(+). This is Acetaldehyde dehydrogenase (cbzQ) from Pseudomonas putida (Arthrobacter siderocapsulatus).